The sequence spans 29 residues: Toxin Bl-4 (29 aa).

Belongs to the long (4 C-C) scorpion toxin superfamily. Sodium channel inhibitor family. Beta subfamily. In terms of tissue distribution, expressed by the venom gland.

The protein localises to the secreted. Excitatory insect beta-toxins induce a spastic paralysis. They bind voltage-independently at site-4 of sodium channels (Nav) and shift the voltage of activation toward more negative potentials thereby affecting sodium channel activation and promoting spontaneous and repetitive firing. The fraction to which this protein belongs exhibits low toxicity and induces transient paralysis in all insects tested (the crickets A.domesticus). This Buthacus leptochelys (Egyptian fat-tailed scorpion) protein is Toxin Bl-4.